We begin with the raw amino-acid sequence, 281 residues long: Biotin synthase (281 aa).

Positions methionine 1–arginine 230 constitute a Radical SAM core domain. The [4Fe-4S] cluster site is built by cysteine 18, cysteine 22, and cysteine 25. 3 residues coordinate [2Fe-2S] cluster: cysteine 62, cysteine 97, and arginine 223.

It belongs to the radical SAM superfamily. Biotin synthase family. In terms of assembly, homodimer. Requires [4Fe-4S] cluster as cofactor. It depends on [2Fe-2S] cluster as a cofactor.

The enzyme catalyses (4R,5S)-dethiobiotin + (sulfur carrier)-SH + 2 reduced [2Fe-2S]-[ferredoxin] + 2 S-adenosyl-L-methionine = (sulfur carrier)-H + biotin + 2 5'-deoxyadenosine + 2 L-methionine + 2 oxidized [2Fe-2S]-[ferredoxin]. Its pathway is cofactor biosynthesis; biotin biosynthesis; biotin from 7,8-diaminononanoate: step 2/2. Functionally, catalyzes the conversion of dethiobiotin (DTB) to biotin by the insertion of a sulfur atom into dethiobiotin via a radical-based mechanism. The polypeptide is Biotin synthase (Sulfurimonas denitrificans (strain ATCC 33889 / DSM 1251) (Thiomicrospira denitrificans (strain ATCC 33889 / DSM 1251))).